Reading from the N-terminus, the 281-residue chain is MAVNVYSTSVTSENLSRHDMLAWVNDSLHLNYTKIEQLCSGAAYCQFMDMLFPGCVHLRKVKFQAKLEHEYIHNFKVLQAAFKKMGVDKIIPVEKLVKGKFQDNFEFIQWFKKFFDANYDGKDYNPLLARQGQDVAPPPNPGDQIFNKSKKLIGTAVPQRTSPTGPKNMQTSGRLSNVAPPCILRKNPPSARNGGHETDAQILELNQQLVDLKLTVDGLEKERDFYFSKLRDIELICQEHESENSPVISGIIGILYATEEGFAPPEDDEIEEHQQEDQDEY.

The Calponin-homology (CH) domain maps to 14 to 116; it reads NLSRHDMLAW…FIQWFKKFFD (103 aa). Residues 157-181 form a disordered region; it reads VPQRTSPTGPKNMQTSGRLSNVAPP. Residues 158 to 175 show a composition bias toward polar residues; that stretch reads PQRTSPTGPKNMQTSGRL. 2 positions are modified to phosphoserine: Ser-162 and Ser-176. Positions 194 to 264 constitute an EB1 C-terminal domain; the sequence is GGHETDAQIL…LYATEEGFAP (71 aa). The segment at 217-260 is APC-binding; sequence DGLEKERDFYFSKLRDIELICQEHESENSPVISGIIGILYATEE. Residues 217-281 form a DCTN1-binding region; that stretch reads DGLEKERDFY…EHQQEDQDEY (65 aa). The segment at 261–281 is disordered; that stretch reads GFAPPEDDEIEEHQQEDQDEY. The segment covering 272-281 has biased composition (basic and acidic residues); that stretch reads EHQQEDQDEY.

Belongs to the MAPRE family. Homodimer. Heterodimer with MAPRE1. Binds monomeric and polymerized GTP-bound tubulin. Interacts with APC2. Interacts with DCTN1 and SRCIN1. Binds to the C-terminal domain of APC. Interacts (via C-terminus) with CLIP1. Interacts with SLAIN2 and SLAIN1. Interacts with AKAP9. Interacts with PDE4DIP. Interacts with PDE4DIP isoform 13/MMG8/SMYLE; this interaction is required for its recruitment to the Golgi apparatus. As to expression, predominantly expressed in brain and muscle.

The protein localises to the cytoplasm. It localises to the cytoskeleton. Its function is as follows. Plus-end tracking protein (+TIP) that binds to the plus-end of microtubules and regulates the dynamics of the microtubule cytoskeleton. Promotes microtubule growth. May be involved in spindle function by stabilizing microtubules and anchoring them at centrosomes. Also acts as a regulator of minus-end microtubule organization: interacts with the complex formed by AKAP9 and PDE4DIP, leading to recruit CAMSAP2 to the Golgi apparatus, thereby tethering non-centrosomal minus-end microtubules to the Golgi, an important step for polarized cell movement. Promotes elongation of CAMSAP2-decorated microtubule stretches on the minus-end of microtubules. The sequence is that of Microtubule-associated protein RP/EB family member 3 (MAPRE3) from Homo sapiens (Human).